Consider the following 629-residue polypeptide: uncharacterized protein (629 aa).

Residues 4–255 form the ABC transporter 1 domain; that stretch reads LKAENLYKTY…KRAEREAQAE (252 aa). 36–43 contributes to the ATP binding site; that stretch reads GPNGTGKS. Residues 284 to 304 are disordered; the sequence is KARIDRVETLKEQTGPQSSGS. Residues 285–294 are compositionally biased toward basic and acidic residues; the sequence is ARIDRVETLK. The segment covering 295–304 has biased composition (polar residues); sequence EQTGPQSSGS. The 219-residue stretch at 319–537 folds into the ABC transporter 2 domain; that stretch reads IEAENVMIAY…EESKAKKAAP (219 aa). An ATP-binding site is contributed by 351-358; sequence GPNGIGKT. The segment at 530–555 is disordered; sequence SKAKKAAPKPAAEEKTAEAEPKKKRK. Basic and acidic residues predominate over residues 540–550; that stretch reads AAEEKTAEAEP. The stretch at 560–629 forms a coiled coil; sequence KDQLEWDGIE…LSLMIEELES (70 aa).

This sequence belongs to the ABC transporter superfamily.

This is an uncharacterized protein from Bacillus subtilis (strain 168).